The primary structure comprises 408 residues: RNA-splicing ligase RtcB (408 aa).

The Mn(2+) site is built by Asp-75, Cys-78, His-168, His-185, and His-281. 167–171 (NHFIE) lines the GMP pocket. GMP is bound by residues 281 to 282 (HN), 313 to 316 (PGSM), Ser-320, 337 to 340 (HGAG), and Lys-407. The active-site GMP-histidine intermediate is His-337.

It belongs to the RtcB family. In terms of assembly, monomer. Mn(2+) serves as cofactor.

The enzyme catalyses a 3'-end 3'-phospho-ribonucleotide-RNA + a 5'-end dephospho-ribonucleoside-RNA + GTP = a ribonucleotidyl-ribonucleotide-RNA + GMP + diphosphate. It catalyses the reaction a 3'-end 2',3'-cyclophospho-ribonucleotide-RNA + a 5'-end dephospho-ribonucleoside-RNA + GTP + H2O = a ribonucleotidyl-ribonucleotide-RNA + GMP + diphosphate + H(+). Functionally, GTP-dependent RNA ligase that is involved in RNA repair. Joins RNA with 2',3'-cyclic-phosphate or 3'-phosphate ends to RNA with 5'-hydroxy ends. Also acts as a DNA ligase in case of DNA damage by splicing 'dirty' DNA breaks, characterized by 3'-phosphate (or cyclic-phosphate) and 5'-hydroxy ends that cannot be sealed by classical DNA ligases. Repairs tRNA cleaved by colicins D or E5, does not repair damaged 16S rRNA. Its function is as follows. Able to catalyze tRNA splicing in vivo in yeast, but bacteria are not known to splice tRNA. The protein is RNA-splicing ligase RtcB of Escherichia coli (strain K12).